We begin with the raw amino-acid sequence, 532 residues long: Invertase 2 (532 aa).

Residues 1-19 (MLLQAFLFLLAGFAAKISA) form the signal peptide. Asparagine 23 is a glycosylation site (N-linked (GlcNAc...) asparagine). Residues 39–42 (WMND) and glutamine 60 each bind substrate. Aspartate 42 is a catalytic residue. Asparagine 64 carries N-linked (GlcNAc...) asparagine; partial glycosylation. N-linked (GlcNAc...) asparagine glycosylation is present at asparagine 97. 102–103 (FS) is a substrate binding site. N-linked (GlcNAc...) asparagine glycosylation is found at asparagine 111 and asparagine 118. A glycan (N-linked (GlcNAc...) asparagine; partial) is linked at asparagine 165. Substrate contacts are provided by residues 170–171 (RD) and glutamate 223. Asparagine 266 and asparagine 275 each carry an N-linked (GlcNAc...) asparagine; partial glycan. A substrate-binding site is contributed by tryptophan 311. Residues asparagine 356, asparagine 369, asparagine 384, and asparagine 398 are each glycosylated (N-linked (GlcNAc...) asparagine). Residue asparagine 512 is glycosylated (N-linked (GlcNAc...) asparagine; partial).

This sequence belongs to the glycosyl hydrolase 32 family. Isoform Secreted is glycosylated. Isoform Intracellular is not glycosylated.

It localises to the cytoplasm. The protein localises to the secreted. It catalyses the reaction Hydrolysis of terminal non-reducing beta-D-fructofuranoside residues in beta-D-fructofuranosides.. This chain is Invertase 2 (SUC2), found in Saccharomyces cerevisiae (strain ATCC 204508 / S288c) (Baker's yeast).